We begin with the raw amino-acid sequence, 91 residues long: Insertion element IS1 2 protein InsA (91 aa).

The protein belongs to the IS1 elements InsA family.

Functionally, absolutely required for transposition of IS1. This Escherichia coli (strain K12) protein is Insertion element IS1 2 protein InsA (insA2).